A 255-amino-acid polypeptide reads, in one-letter code: Gene 54 protein (255 aa).

The chain is Gene 54 protein (54) from Mycobacterium (Mycobacteriophage L5).